Consider the following 944-residue polypeptide: 2-oxoglutarate dehydrogenase E1 component (944 aa).

The disordered stretch occupies residues 918-944 (SSTAEGDPTVHKKEQERIVSDSLTRKN). The span at 925 to 936 (PTVHKKEQERIV) shows a compositional bias: basic and acidic residues.

This sequence belongs to the alpha-ketoglutarate dehydrogenase family. In terms of assembly, homodimer. Part of the 2-oxoglutarate dehydrogenase (OGDH) complex composed of E1 (2-oxoglutarate dehydrogenase), E2 (dihydrolipoamide succinyltransferase) and E3 (dihydrolipoamide dehydrogenase); the complex contains multiple copies of the three enzymatic components (E1, E2 and E3). Requires thiamine diphosphate as cofactor.

It carries out the reaction N(6)-[(R)-lipoyl]-L-lysyl-[protein] + 2-oxoglutarate + H(+) = N(6)-[(R)-S(8)-succinyldihydrolipoyl]-L-lysyl-[protein] + CO2. Its function is as follows. E1 component of the 2-oxoglutarate dehydrogenase (OGDH) complex which catalyzes the decarboxylation of 2-oxoglutarate, the first step in the conversion of 2-oxoglutarate to succinyl-CoA and CO(2). The polypeptide is 2-oxoglutarate dehydrogenase E1 component (Bacillus pumilus (strain SAFR-032)).